Reading from the N-terminus, the 1485-residue chain is Chromosome partition protein MukB (1485 aa).

Residue 34–41 (GGNGAGKS) coordinates ATP. Coiled-coil stretches lie at residues 337-480 (LNLV…QAYQ), 509-605 (QHLA…PVWL), 780-805 (RAAR…ATLS), 835-915 (EAEI…IQQH), 977-1116 (GMLT…AKAG), and 1210-1235 (EAIE…KLAI). The flexible hinge stretch occupies residues 666–783 (PSGAEDARLI…EVPLFGRAAR (118 aa)).

It belongs to the SMC family. MukB subfamily. As to quaternary structure, homodimerization via its hinge domain. Binds to DNA via its C-terminal region. Interacts, and probably forms a ternary complex, with MukE and MukF via its C-terminal region. The complex formation is stimulated by calcium or magnesium. Interacts with tubulin-related protein FtsZ.

The protein localises to the cytoplasm. It localises to the nucleoid. In terms of biological role, plays a central role in chromosome condensation, segregation and cell cycle progression. Functions as a homodimer, which is essential for chromosome partition. Involved in negative DNA supercoiling in vivo, and by this means organize and compact chromosomes. May achieve or facilitate chromosome segregation by condensation DNA from both sides of a centrally located replisome during cell division. The sequence is that of Chromosome partition protein MukB from Yersinia pestis bv. Antiqua (strain Antiqua).